Reading from the N-terminus, the 169-residue chain is Thermonuclease (169 aa).

The signal sequence occupies residues 1-26 (MKKITTGLIIVVAAIIVLSIQFMTES). Residues arginine 65, glutamate 73, and arginine 115 contribute to the active site.

This sequence belongs to the thermonuclease family. Ca(2+) is required as a cofactor.

The protein resides in the secreted. The enzyme catalyses Endonucleolytic cleavage to nucleoside 3'-phosphates and 3'-phosphooligonucleotide end-products.. Enzyme that catalyzes the hydrolysis of both DNA and RNA at the 5'-position of the phosphodiester bond. The chain is Thermonuclease (nucH) from Staphylococcus hyicus.